A 259-amino-acid polypeptide reads, in one-letter code: Ribosomal RNA small subunit methyltransferase J (259 aa).

S-adenosyl-L-methionine contacts are provided by residues 101–102 (RD), 117–118 (ER), 153–154 (SS), and Asp-176.

It belongs to the methyltransferase superfamily. RsmJ family.

It is found in the cytoplasm. The catalysed reaction is guanosine(1516) in 16S rRNA + S-adenosyl-L-methionine = N(2)-methylguanosine(1516) in 16S rRNA + S-adenosyl-L-homocysteine + H(+). Functionally, specifically methylates the guanosine in position 1516 of 16S rRNA. This is Ribosomal RNA small subunit methyltransferase J from Vibrio vulnificus (strain CMCP6).